A 419-amino-acid polypeptide reads, in one-letter code: UDP-N-acetylglucosamine 1-carboxyvinyltransferase (419 aa).

22 to 23 contacts phosphoenolpyruvate; it reads KN. Residue Arg91 participates in UDP-N-acetyl-alpha-D-glucosamine binding. Cys115 serves as the catalytic Proton donor. 2-(S-cysteinyl)pyruvic acid O-phosphothioketal is present on Cys115. Residues 120-124, 160-163, Asp305, and Val327 contribute to the UDP-N-acetyl-alpha-D-glucosamine site; these read RPVDL and KVSV.

Belongs to the EPSP synthase family. MurA subfamily.

Its subcellular location is the cytoplasm. It catalyses the reaction phosphoenolpyruvate + UDP-N-acetyl-alpha-D-glucosamine = UDP-N-acetyl-3-O-(1-carboxyvinyl)-alpha-D-glucosamine + phosphate. It functions in the pathway cell wall biogenesis; peptidoglycan biosynthesis. Cell wall formation. Adds enolpyruvyl to UDP-N-acetylglucosamine. The sequence is that of UDP-N-acetylglucosamine 1-carboxyvinyltransferase from Shigella sonnei (strain Ss046).